Here is a 394-residue protein sequence, read N- to C-terminus: MGIKQLFTIIKENAPAAIKTGEIKNQFGRKVAIDASMSIYSFLIAVRSNGEMLTNEDGQTTSHLMGMFYRTLRMVDNGIKPLYVFDGAPPKLKSGELARRYQRKQEALEGLEEARETGTAEDVEKFSRRTVRVTREHNEECRQLLKLMGIPYIIAPTEAEAQCAVLARAGKVFAAASEDMDTLCFDSPILLRHLTFSEARKEPIQEIHVDKVLEGLDMDRKQFVDLCILLGCDYLDPIPKVGPSTALKLIREHGSLETIVEKMKKGELKYTVPEDWPFEDARDLFFNPAVHPADHPDCNFKWEKPDVEGLVKYLVTEKGFSEDRVRPGALRLEKALGTSQQQRLEGFFKPVARTAEEQKAHKRKLEVKAEEAKKKLKAEKKEKAKAKARPRGTA.

The N-domain stretch occupies residues 1 to 104 (MGIKQLFTII…GELARRYQRK (104 aa)). D34 provides a ligand contact to Mg(2+). R47 and R70 together coordinate DNA. D86, E158, E160, D179, and D181 together coordinate Mg(2+). Residues 122–253 (DVEKFSRRTV…STALKLIREH (132 aa)) are I-domain. E158 serves as a coordination point for DNA. The DNA site is built by G231 and D233. D233 provides a ligand contact to Mg(2+). Positions 340–348 (QQQRLEGFF) are interaction with PCNA. Residues 358-394 (QKAHKRKLEVKAEEAKKKLKAEKKEKAKAKARPRGTA) are disordered. The span at 374–394 (KKLKAEKKEKAKAKARPRGTA) shows a compositional bias: basic residues.

Belongs to the XPG/RAD2 endonuclease family. FEN1 subfamily. In terms of assembly, interacts with PCNA. Three molecules of FEN1 bind to one PCNA trimer with each molecule binding to one PCNA monomer. PCNA stimulates the nuclease activity without altering cleavage specificity. Mg(2+) is required as a cofactor. Post-translationally, phosphorylated. Phosphorylation upon DNA damage induces relocalization to the nuclear plasma.

The protein localises to the nucleus. It localises to the nucleolus. It is found in the nucleoplasm. Its subcellular location is the mitochondrion. In terms of biological role, structure-specific nuclease with 5'-flap endonuclease and 5'-3' exonuclease activities involved in DNA replication and repair. During DNA replication, cleaves the 5'-overhanging flap structure that is generated by displacement synthesis when DNA polymerase encounters the 5'-end of a downstream Okazaki fragment. It enters the flap from the 5'-end and then tracks to cleave the flap base, leaving a nick for ligation. Also involved in the long patch base excision repair (LP-BER) pathway, by cleaving within the apurinic/apyrimidinic (AP) site-terminated flap. Acts as a genome stabilization factor that prevents flaps from equilibrating into structures that lead to duplications and deletions. Also possesses 5'-3' exonuclease activity on nicked or gapped double-stranded DNA, and exhibits RNase H activity. Also involved in replication and repair of rDNA and in repairing mitochondrial DNA. The protein is Flap endonuclease 1 of Pyricularia oryzae (strain 70-15 / ATCC MYA-4617 / FGSC 8958) (Rice blast fungus).